Consider the following 202-residue polypeptide: Translation initiation factor IF-3 (202 aa).

A disordered region spans residues 178–202; it reads TPRKTPLLKKESETTEPKKALRSIN. Residues 185 to 196 show a composition bias toward basic and acidic residues; the sequence is LKKESETTEPKK.

This sequence belongs to the IF-3 family. Monomer.

It is found in the cytoplasm. In terms of biological role, IF-3 binds to the 30S ribosomal subunit and shifts the equilibrium between 70S ribosomes and their 50S and 30S subunits in favor of the free subunits, thus enhancing the availability of 30S subunits on which protein synthesis initiation begins. This chain is Translation initiation factor IF-3, found in Prochlorococcus marinus (strain NATL1A).